Reading from the N-terminus, the 524-residue chain is Protein tweety homolog 3 (524 aa).

Residues 1 to 42 lie on the Extracellular side of the membrane; the sequence is MAGVSYAAPWWVSLLHRLPHFDLRWEATSSQFRPEDADYQQA. The helical transmembrane segment at 43–63 threads the bilayer; that stretch reads LLLLGATALACLALDLLFLLF. At 64–86 the chain is on the cytoplasmic side; the sequence is YSFWLCCRRRKTDEHLDADCCCT. The helical transmembrane segment at 87–107 threads the bilayer; the sequence is AWCVIITTLVCSAGIAVGFYG. The Extracellular segment spans residues 108-211; that stretch reads NGETSDGIHR…VDLYDWYRWL (104 aa). 2 residues coordinate Ca(2+): E110 and D113. Residues N126 and N144 are each glycosylated (N-linked (GlcNAc...) asparagine). Residues 212–232 form a helical membrane-spanning segment; it reads GYLGLLLLDVIICLLVLVGLI. At 233–236 the chain is on the cytoplasmic side; sequence RSSK. A helical membrane pass occupies residues 237–257; sequence GILVGVCLLGVLALVISWGAL. The Extracellular segment spans residues 258-386; that stretch reads GLELAVSVGS…LTGFCYDGVE (129 aa). Disulfide bonds link C271–C381 and C299–C366. N351 carries an N-linked (GlcNAc...) asparagine glycan. Residues 387-407 traverse the membrane as a helical segment; sequence GLIYLALFSFVTALMFSSIVC. Over 408–524 the chain is Cytoplasmic; the sequence is SIPHTWQQKR…PRPDSSGSGH (117 aa). Disordered regions lie at residues 413–435 and 485–524; these read WQQK…RQAH and RCEN…GSGH. S496 bears the Phosphoserine mark. The PY-motif; mediates interaction with NEDD4L signature appears at 498–501; sequence PPSY. A compositionally biased stretch (polar residues) spans 501-524; it reads YTSSMRAKYLATSQPRPDSSGSGH. 2 positions are modified to phosphoserine: S504 and S522.

The protein belongs to the tweety family. As to quaternary structure, homotetramer; disulfide-linked. Forms cis-homodimers in the presence of Ca(2+). Interacts with NEDD4L. Post-translationally, ubiquitinated by NEDD4L. N-glycosylated. In terms of tissue distribution, expressed in excitable tissues. Expressed in the brain, heart, skeletal muscle, colon, spleen, kidney and peripheral blood leukocytes. Also expressed in fat, the pancreas, thymus, and uterus.

The protein resides in the cell membrane. The enzyme catalyses chloride(in) = chloride(out). The catalysed reaction is L-glutamate(out) = L-glutamate(in). Inhibited by (4-[(2-butyl-6,7-dichloro-2- cyclopentyl-2,3-dihydro-1-oxo-1H-inden-5-yl)oxy]butanoic acid), genistein and PD98059 (MEK1 inhibitor). In terms of biological role, calcium-independent, swelling-dependent volume-regulated anion channel (VRAC-swell) which plays a pivotal role in the process of regulatory volume decrease (RVD) in the brain through the efflux of anions like chloride and organic osmolytes like glutamate. Probable large-conductance Ca(2+)-activated chloride channel. The polypeptide is Protein tweety homolog 3 (Ttyh3) (Mus musculus (Mouse)).